The sequence spans 446 residues: Tripartite motif-containing protein 43C (446 aa).

The RING-type zinc finger occupies 16-57 (CSICQGIFMDPVYLRCGHKFCETCLLLFQEDIKFPAYCPTCR). The segment at 88 to 129 (SEEHKCVTHKAKKMIFCDKSKILLCHLCSDSQEHSGHTHCSI) adopts a B box-type zinc-finger fold. Residues C93, H96, C115, and H121 each coordinate Zn(2+). The B30.2/SPRY domain maps to 271 to 446 (RLRAHSIPGL…VRPFFFAAYT (176 aa)).

This sequence belongs to the TRIM/RBCC family.

The protein is Tripartite motif-containing protein 43C of Mus musculus (Mouse).